A 541-amino-acid chain; its full sequence is Neutral amino acid transporter B(0) (541 aa).

Position 1 is an N-acetylmethionine (methionine 1). Residues 1-10 (MVADPPKGDP) are compositionally biased toward basic and acidic residues. Positions 1–32 (MVADPPKGDPKGLAAVEPTANGAPAQDPLEDS) are disordered. Residues 1–52 (MVADPPKGDPKGLAAVEPTANGAPAQDPLEDSGAAVGRCCSSRDQVRRCLRA) are Cytoplasmic-facing. Residues 53 to 82 (NLLVLLTVVAVVAGVALGLAVSGAGGALAL) form a helical membrane-spanning segment. Over 83–95 (GPARLIAFAFPGE) the chain is Extracellular. A helical transmembrane segment spans residues 96–117 (LLLRLLKMIILPLVVCSLVGGA). Over 118 to 131 (ASLDPSALGRLGAW) the chain is Cytoplasmic. Residues 132–154 (ALLFFLVTTLLASALGVGLALAL) traverse the membrane as a helical segment. Over 155-225 (QPGAAFAAMN…GTLVKVPVAH (71 aa)) the chain is Extracellular. N-linked (GlcNAc...) asparagine glycans are attached at residues asparagine 164 and asparagine 215. The helical transmembrane segment at 226-249 (EEEGMNILGLVVFAIVFGVALRKL) threads the bilayer. The Cytoplasmic segment spans residues 250 to 258 (GPEGEPLIR). A helical transmembrane segment spans residues 259-286 (FFNSFNDATMVLVSWIMWYAPVGILFLV). Topologically, residues 287 to 307 (ASKIVEMDDVGVLFASLGKYI) are extracellular. Residues 308 to 329 (LCCLLGHAIHGLLVLPLIYFLF) traverse the membrane as a helical segment. The Cytoplasmic segment spans residues 330–334 (TRKNP). Residues 335-365 (YRFLWGILTPLAMAFGTSSSSATLPLMMKCV) constitute an intramembrane region (discontinuously helical). At 366–374 (EERNGVAKH) the chain is on the cytoplasmic side. The helical transmembrane segment at 375–401 (ISRFVLPIGATVNMDGAALFQCVAAVF) threads the bilayer. 3 residues coordinate Na(+): glycine 383, threonine 385, and asparagine 387. At 402–414 (IAQLNRQSLDFVK) the chain is on the extracellular side. The discontinuously helical intramembrane region spans 415 to 448 (IITILVTATASSVGAAGIPAGGVLTLAIILEAVS). Residues 449–461 (LPVSEISLILAVD) are Extracellular-facing. A helical transmembrane segment spans residues 462–483 (WLVDRSCTIINVEGDAFGAGLL). Positions 472 and 476 each coordinate Na(+). At 484-541 (QHYVDRTEQRGSEPELTQVKSEVPLGSLPAPNEEGNPLLRHSPGAAGDAGACEKESVM) the chain is on the cytoplasmic side. The disordered stretch occupies residues 493 to 541 (RGSEPELTQVKSEVPLGSLPAPNEEGNPLLRHSPGAAGDAGACEKESVM). Residues serine 495, serine 504, and serine 539 each carry the phosphoserine modification.

It belongs to the dicarboxylate/amino acid:cation symporter (DAACS) (TC 2.A.23) family. SLC1A5 subfamily. In terms of assembly, homotrimer.

It localises to the cell membrane. It is found in the melanosome. The enzyme catalyses L-glutamine(out) + L-serine(in) + Na(+)(out) = L-glutamine(in) + L-serine(out) + Na(+)(in). It carries out the reaction L-glutamine(in) + L-serine(out) + Na(+)(out) = L-glutamine(out) + L-serine(in) + Na(+)(in). It catalyses the reaction L-threonine(in) + L-glutamine(out) + Na(+)(out) = L-threonine(out) + L-glutamine(in) + Na(+)(in). The catalysed reaction is L-threonine(out) + L-glutamine(in) + Na(+)(out) = L-threonine(in) + L-glutamine(out) + Na(+)(in). The enzyme catalyses L-asparagine(in) + L-glutamine(out) + Na(+)(out) = L-asparagine(out) + L-glutamine(in) + Na(+)(in). It carries out the reaction L-asparagine(out) + L-glutamine(in) + Na(+)(out) = L-asparagine(in) + L-glutamine(out) + Na(+)(in). It catalyses the reaction L-glutamine(in) + L-alanine(out) + Na(+)(out) = L-glutamine(out) + L-alanine(in) + Na(+)(in). The catalysed reaction is L-valine(out) + L-glutamine(in) + Na(+)(out) = L-valine(in) + L-glutamine(out) + Na(+)(in). The enzyme catalyses L-glutamine(in) + L-methionine(out) + Na(+)(out) = L-glutamine(out) + L-methionine(in) + Na(+)(in). It carries out the reaction L-glutamine(in) + L-glutamate(out) + Na(+)(out) + H(+)(out) = L-glutamine(out) + L-glutamate(in) + Na(+)(in) + H(+)(in). It catalyses the reaction D-serine(in) + L-glutamine(out) + Na(+)(out) = D-serine(out) + L-glutamine(in) + Na(+)(in). The catalysed reaction is D-serine(in) + L-alanine(out) + Na(+)(out) = D-serine(out) + L-alanine(in) + Na(+)(in). The enzyme catalyses nitrate(in) = nitrate(out). It carries out the reaction iodide(out) = iodide(in). It catalyses the reaction thiocyanate(in) = thiocyanate(out). Functionally, sodium-coupled antiporter of neutral amino acids. In a tri-substrate transport cycle, exchanges neutral amino acids between the extracellular and intracellular compartments, coupled to the inward cotransport of at least one sodium ion. The preferred substrate is the essential amino acid L-glutamine, a precursor for biosynthesis of proteins, nucleotides and amine sugars as well as an alternative fuel for mitochondrial oxidative phosphorylation. Exchanges L-glutamine with other neutral amino acids such as L-serine, L-threonine and L-asparagine in a bidirectional way. Provides L-glutamine to proliferating stem and activated cells driving the metabolic switch toward cell differentiation. The transport cycle is usually pH-independent, with the exception of L-glutamate. Transports extracellular L-glutamate coupled to the cotransport of one proton and one sodium ion in exchange for intracellular L-glutamine counter-ion. May provide for L-glutamate uptake in glial cells regulating glutamine/glutamate cycle in the nervous system. Can transport D-amino acids. Mediates D-serine release from the retinal glia potentially affecting NMDA receptor function in retinal neurons. Displays sodium- and amino acid-dependent but uncoupled channel-like anion conductance with a preference SCN(-) &gt;&gt; NO3(-) &gt; I(-) &gt; Cl(-). Through binding of the fusogenic protein syncytin-1/ERVW-1 may mediate trophoblasts syncytialization, the spontaneous fusion of their plasma membranes, an essential process in placental development. This is Neutral amino acid transporter B(0) (SLC1A5) from Oryctolagus cuniculus (Rabbit).